The following is a 704-amino-acid chain: Seven transmembrane domain-containing serine/threonine-protein kinase 2 (704 aa).

At 1-5 (MPSKE) the chain is on the extracellular side. The helical transmembrane segment at 6 to 26 (FIIPLILLCFYSVNGFVAVIS) threads the bilayer. Topologically, residues 27-42 (SLVELFIHKASWNSIK) are cytoplasmic. The helical transmembrane segment at 43-63 (IFFYSLLILQCLCRCIIIGWG) threads the bilayer. The Extracellular segment spans residues 64 to 76 (MIETVQGGEFYSN). A helical transmembrane segment spans residues 77 to 97 (FPSLLFISYAGLVALQMIQFL). Topologically, residues 98 to 121 (PNDNQYLLLSEGKKNNHKVKVGTN) are cytoplasmic. The chain crosses the membrane as a helical span at residues 122–142 (ILIFFNLFMYFGMFLLFGIAE). The Extracellular segment spans residues 143-185 (KQVGNSTSFNHHGNHNSTTSTSTDEIPLVSTEVGELYLFGDKD). 2 N-linked (GlcNAc...) asparagine glycosylation sites follow: Asn147 and Asn158. Residues 186–206 (PIYIVLDCFYFVCLLLLLIFH) form a helical membrane-spanning segment. Residues 207 to 224 (SYVGWKTYKRNKDLFGIK) are Cytoplasmic-facing. The helical transmembrane segment at 225 to 245 (LNVIHLILLICIFIRSLLVII) threads the bilayer. Over 246 to 265 (DPSSPNNSILHIDTESWLIY) the chain is Extracellular. The N-linked (GlcNAc...) asparagine glycan is linked to Asn251. The chain crosses the membrane as a helical span at residues 266–286 (IYTISYYVVGEIIPGMLLIVI). Over 287-704 (EFLLPYHKRK…WSIEKDSSSK (418 aa)) the chain is Cytoplasmic. The Protein kinase domain occupies 317-682 (IAIHELLGMG…SLGVKFHLAN (366 aa)). ATP contacts are provided by residues 323–331 (LGMGGSGAM) and Lys350. Residue Asp506 is the Proton acceptor of the active site.

It belongs to the protein kinase superfamily. Ser/Thr protein kinase family.

The protein localises to the membrane. It catalyses the reaction L-seryl-[protein] + ATP = O-phospho-L-seryl-[protein] + ADP + H(+). The enzyme catalyses L-threonyl-[protein] + ATP = O-phospho-L-threonyl-[protein] + ADP + H(+). This chain is Seven transmembrane domain-containing serine/threonine-protein kinase 2 (7tmk2), found in Dictyostelium discoideum (Social amoeba).